An 87-amino-acid polypeptide reads, in one-letter code: U14-lycotoxin-Ls1b (87 aa).

The first 20 residues, 1-20, serve as a signal peptide directing secretion; the sequence is MNSKVFVVLLLLALSTCVLS. The 46-residue stretch at 21–66 folds into the WAP domain; it reads EKYCPTPRNTSCKKMNIRNNCCRDSDCTSNAFCCAEPCGNFCHKAS. 5 cysteine pairs are disulfide-bonded: cysteine 24/cysteine 54, cysteine 32/cysteine 58, cysteine 41/cysteine 53, cysteine 42/cysteine 80, and cysteine 47/cysteine 62.

This sequence belongs to the venom protein 11 family. 01 (wap-1) subfamily. In terms of processing, contains 5 disulfide bonds. As to expression, expressed by the venom gland.

Its subcellular location is the secreted. Has antibacterial activity. The protein is U14-lycotoxin-Ls1b of Lycosa singoriensis (Wolf spider).